The primary structure comprises 127 residues: Glycine cleavage system H protein (127 aa).

Residues 24-105 (TALVGITDFA…YGSGWMVKMK (82 aa)) enclose the Lipoyl-binding domain. K65 is modified (N6-lipoyllysine).

This sequence belongs to the GcvH family. In terms of assembly, the glycine cleavage system is composed of four proteins: P, T, L and H. Requires (R)-lipoate as cofactor.

The glycine cleavage system catalyzes the degradation of glycine. The H protein shuttles the methylamine group of glycine from the P protein to the T protein. The polypeptide is Glycine cleavage system H protein (Chlorobium luteolum (strain DSM 273 / BCRC 81028 / 2530) (Pelodictyon luteolum)).